Reading from the N-terminus, the 344-residue chain is uncharacterized protein (344 aa).

The protein belongs to the MG414/MG415 family.

This is an uncharacterized protein from Mycoplasma pneumoniae (strain ATCC 29342 / M129 / Subtype 1) (Mycoplasmoides pneumoniae).